The primary structure comprises 412 residues: [Pyruvate dehydrogenase (acetyl-transferring)] kinase isozyme 4, mitochondrial (412 aa).

In terms of domain architecture, Histidine kinase spans 138–368; sequence ILEYKDTCTV…DAIIYLKALS (231 aa). Residues 254–261, Asp293, 312–313, and 329–334 each bind ATP; these read ELFKNAMR, ST, and GFGYGL.

This sequence belongs to the PDK/BCKDK protein kinase family. As to quaternary structure, homodimer. Interacts with the pyruvate dehydrogenase complex subunit DLAT, and is part of the multimeric pyruvate dehydrogenase complex that contains multiple copies of pyruvate dehydrogenase (E1), dihydrolipoamide acetyltransferase (DLAT, E2) and lipoamide dehydrogenase (DLD, E3).

The protein localises to the mitochondrion matrix. The enzyme catalyses L-seryl-[pyruvate dehydrogenase E1 alpha subunit] + ATP = O-phospho-L-seryl-[pyruvate dehydrogenase E1 alpha subunit] + ADP + H(+). Functionally, kinase that plays a key role in regulation of glucose and fatty acid metabolism and homeostasis via phosphorylation of the pyruvate dehydrogenase subunits PDHA1 and PDHA2. This inhibits pyruvate dehydrogenase activity, and thereby regulates metabolite flux through the tricarboxylic acid cycle, down-regulates aerobic respiration and inhibits the formation of acetyl-coenzyme A from pyruvate. Inhibition of pyruvate dehydrogenase decreases glucose utilization and increases fat metabolism in response to prolonged fasting and starvation. Plays an important role in maintaining normal blood glucose levels under starvation, and is involved in the insulin signaling cascade. Via its regulation of pyruvate dehydrogenase activity, plays an important role in maintaining normal blood pH and in preventing the accumulation of ketone bodies under starvation. In the fed state, mediates cellular responses to glucose levels and to a high-fat diet. Regulates both fatty acid oxidation and de novo fatty acid biosynthesis. Plays a role in the generation of reactive oxygen species. Protects detached epithelial cells against anoikis. Plays a role in cell proliferation via its role in regulating carbohydrate and fatty acid metabolism. The sequence is that of [Pyruvate dehydrogenase (acetyl-transferring)] kinase isozyme 4, mitochondrial (Pdk4) from Mus musculus (Mouse).